Consider the following 376-residue polypeptide: Succinyl-diaminopimelate desuccinylase (376 aa).

A Zn(2+)-binding site is contributed by His67. Asp69 is an active-site residue. Position 100 (Asp100) interacts with Zn(2+). Glu134 serves as the catalytic Proton acceptor. Glu135, Glu163, and His349 together coordinate Zn(2+).

Belongs to the peptidase M20A family. DapE subfamily. Homodimer. Zn(2+) serves as cofactor. The cofactor is Co(2+).

It catalyses the reaction N-succinyl-(2S,6S)-2,6-diaminopimelate + H2O = (2S,6S)-2,6-diaminopimelate + succinate. It functions in the pathway amino-acid biosynthesis; L-lysine biosynthesis via DAP pathway; LL-2,6-diaminopimelate from (S)-tetrahydrodipicolinate (succinylase route): step 3/3. Its function is as follows. Catalyzes the hydrolysis of N-succinyl-L,L-diaminopimelic acid (SDAP), forming succinate and LL-2,6-diaminopimelate (DAP), an intermediate involved in the bacterial biosynthesis of lysine and meso-diaminopimelic acid, an essential component of bacterial cell walls. The sequence is that of Succinyl-diaminopimelate desuccinylase from Shewanella denitrificans (strain OS217 / ATCC BAA-1090 / DSM 15013).